The sequence spans 495 residues: Probable histidine ammonia-lyase (495 aa).

The segment at residues 141 to 143 is a cross-link (5-imidazolinone (Ala-Gly)); sequence ASG. Ser142 is modified (2,3-didehydroalanine (Ser)).

This sequence belongs to the PAL/histidase family. Post-translationally, contains an active site 4-methylidene-imidazol-5-one (MIO), which is formed autocatalytically by cyclization and dehydration of residues Ala-Ser-Gly.

The protein localises to the cytoplasm. The catalysed reaction is L-histidine = trans-urocanate + NH4(+). It participates in amino-acid degradation; L-histidine degradation into L-glutamate; N-formimidoyl-L-glutamate from L-histidine: step 1/3. In Thermoplasma volcanium (strain ATCC 51530 / DSM 4299 / JCM 9571 / NBRC 15438 / GSS1), this protein is Probable histidine ammonia-lyase.